The chain runs to 64 residues: Large ribosomal subunit protein bL35 (64 aa).

A disordered region spans residues 1-55; the sequence is MPKMKSNKSVAARFKLTGSGQLKRTRPGKRHKLSKRSSQQKRNLSKQPLVDQGQV. Residues 23–39 are compositionally biased toward basic residues; sequence KRTRPGKRHKLSKRSSQ.

Belongs to the bacterial ribosomal protein bL35 family.

The sequence is that of Large ribosomal subunit protein bL35 from Chlamydia muridarum (strain MoPn / Nigg).